The chain runs to 160 residues: MRLILLCVGRCKAGPETELSQRYIERANAAGRALGFPRVELREFDESRAREPALRKAAEAKTILASLSPGARLVALDESGALVSSREFSAFLGKTRDEGAPALTLAIGGADGLSGEILEAASPIVSFGRMTFPHQLVRIMAAEQLYRAMTILAGHPYHRD.

S-adenosyl-L-methionine is bound by residues Leu76, Gly108, and 127–132; that span reads FGRMTF.

It belongs to the RNA methyltransferase RlmH family. In terms of assembly, homodimer.

It is found in the cytoplasm. It catalyses the reaction pseudouridine(1915) in 23S rRNA + S-adenosyl-L-methionine = N(3)-methylpseudouridine(1915) in 23S rRNA + S-adenosyl-L-homocysteine + H(+). Its function is as follows. Specifically methylates the pseudouridine at position 1915 (m3Psi1915) in 23S rRNA. In Methylocella silvestris (strain DSM 15510 / CIP 108128 / LMG 27833 / NCIMB 13906 / BL2), this protein is Ribosomal RNA large subunit methyltransferase H.